Reading from the N-terminus, the 454-residue chain is MERKDFETWLDNISVTFLSLTDLQKNETLDHLISLSGAVQLRHLSNNLETLLKRDFLKLLPLELSFYLLKWLDPQTLLTCCLVSKQWNKVISACTEVWQTACKNLGWQIDDSVQDALHWKKVYLKAILRMKQLEDHEAFETSSLIGHSARVYALYYKDGLLCTGSDDLSAKLWDVSTGQCVYGIQTHTCAAVKFDEQKLVTGSFDNTVACWEWSSGARTQHFRGHTGAVFSVDYSDELDILVSGSADFAVKVWALSAGTCLNTLTGHTEWVTKVVLQQCKVKSLLHSPGDYILLSADKYEIKIWPIGREINCKCLKTLSVSEDRSICLQPRLHFDGKYIVCSSALGLYQWDFASYDILRVIKTPEVANLALLGFGDVFALLFDNHYLYIMDLRTESLISRWPLPEYRKSKRGSSFLAGEASWLNGLDGHNDTGLVFATSMPDHSIHLVLWKEHG.

The F-box domain maps to Arg-54–Ala-101. WD repeat units lie at residues Gly-146–Gly-183, Gln-185–His-221, Gly-224–Thr-265, and Leu-276–Cys-314. Residue Lys-298 is modified to N6-acetyllysine.

As to quaternary structure, directly interacts with SKP1 and CUL1.

Functionally, substrate-recognition component of the SCF (SKP1-CUL1-F-box protein)-type E3 ubiquitin ligase complex. In Rattus norvegicus (Rat), this protein is F-box/WD repeat-containing protein 2.